Consider the following 721-residue polypeptide: Ribonucleoside-diphosphate reductase subunit alpha (721 aa).

Residues threonine 159, 175–176, glycine 204, 384–388, and 589–593 each bind substrate; these read SC, NLCSE, and PTGSI. Cysteines 176 and 413 form a disulfide. The active-site Proton acceptor is the asparagine 384. The active-site Cysteine radical intermediate is cysteine 386. Glutamate 388 functions as the Proton acceptor in the catalytic mechanism.

The protein belongs to the ribonucleoside diphosphate reductase large chain family. Tetramer of two alpha and two beta subunits.

The enzyme catalyses a 2'-deoxyribonucleoside 5'-diphosphate + [thioredoxin]-disulfide + H2O = a ribonucleoside 5'-diphosphate + [thioredoxin]-dithiol. With respect to regulation, under complex allosteric control mediated by deoxynucleoside triphosphates and ATP binding. The type of nucleotide bound at the specificity site determines substrate preference. It seems probable that ATP makes the enzyme reduce CDP and UDP, dGTP favors ADP reduction and dTTP favors GDP reduction. In terms of biological role, provides the precursors necessary for DNA synthesis. Catalyzes the biosynthesis of deoxyribonucleotides from the corresponding ribonucleotides. The protein is Ribonucleoside-diphosphate reductase subunit alpha (nrdE) of Mycoplasma pneumoniae (strain ATCC 29342 / M129 / Subtype 1) (Mycoplasmoides pneumoniae).